The chain runs to 264 residues: Ion-translocating oxidoreductase complex subunit B (264 aa).

Residues 5–25 (LINSIAVLAGLGFAVGVMLVI) traverse the membrane as a helical segment. In terms of domain architecture, 4Fe-4S spans 33 to 92 (DSNPLIDDVASLLPGANCGGCGFAGCAACAEAIVEQGAPVNSCPVGGFEVAKQIGALLGQ). [4Fe-4S] cluster is bound by residues Cys-50, Cys-53, Cys-58, Cys-75, Cys-138, Cys-142, Cys-148, Cys-152, Cys-172, Cys-175, Cys-178, Cys-182, Cys-217, Cys-220, Cys-223, Cys-227, Cys-246, Cys-249, Cys-252, and Cys-256. 4Fe-4S ferredoxin-type domains lie at 127–162 (VALMLCDSRKGCTYGCLGLGTCVQACQFGALSMGED), 163–192 (GFPVVNKALCTSCGNCIAACPNGVLTFARD), 207–236 (KDVKAVCEVGCIGCKKCEKECPAGAIRVTE), and 237–264 (FLAEIDQEKCTACGACVAICPQKAIELR).

It belongs to the 4Fe4S bacterial-type ferredoxin family. RnfB subfamily. The Rnf complex is probably composed of eight subunits, including RnfA, RnfB, RnfC, RnfD, RnfE and RnfG. [4Fe-4S] cluster is required as a cofactor.

The protein resides in the cell membrane. Its function is as follows. Part of a membrane-bound complex that couples electron transfer with translocation of ions across the membrane. Catalyzes Na(+) transport, most probably coupled to electron transfer from reduced ferredoxin to methanophenazine and heterodisulfide reductase. Involved in heterodisulfide reduction during methanogenesis from acetate. This chain is Ion-translocating oxidoreductase complex subunit B, found in Methanosarcina acetivorans (strain ATCC 35395 / DSM 2834 / JCM 12185 / C2A).